Here is a 253-residue protein sequence, read N- to C-terminus: uncharacterized protein (253 aa).

Positions 17, 36, 62, 89, 123, 158, 162, 191, and 193 each coordinate NADP(+). Y158 functions as the Proton acceptor in the catalytic mechanism. K162 functions as the Lowers pKa of active site Tyr in the catalytic mechanism.

This sequence belongs to the short-chain dehydrogenases/reductases (SDR) family.

Its subcellular location is the cytoplasm. The protein resides in the nucleus. This is an uncharacterized protein from Schizosaccharomyces pombe (strain 972 / ATCC 24843) (Fission yeast).